The primary structure comprises 642 residues: Uromodulin (642 aa).

A signal peptide spans 1–24 (MGIPLTWMLLVMMVTSWFTLAEAS). N-linked (GlcNAc...) asparagine glycosylation is found at Asn25 and Asn38. Residues 28 to 64 (EARRCSECHNNATCTVDGVVTTCSCQTGFTGDGLVCE) form the EGF-like 1 domain. Cystine bridges form between Cys32/Cys41, Cys35/Cys50, Cys52/Cys63, Cys69/Cys82, Cys77/Cys91, Cys93/Cys105, Cys111/Cys125, Cys119/Cys134, Cys136/Cys147, Cys149/Cys160, Cys154/Cys171, Cys175/Cys268, Cys196/Cys283, Cys218/Cys256, Cys224/Cys288, Cys249/Cys257, Cys298/Cys307, Cys301/Cys316, Cys318/Cys348, Cys336/Cys426, and Cys367/Cys390. An EGF-like 2; calcium-binding domain is found at 65–106 (DMDECATPWTHNCSNSSCVNTPGSFKCSCQDGFRLTPELSCT). N-linked (GlcNAc...) asparagine glycosylation is found at Asn76 and Asn79. Residues 107–148 (DVDECSEQGLSNCHALATCVNTEGDYLCVCPEGFTGDGWYCE) form the EGF-like 3; calcium-binding domain. The segment at 149-172 (CSPGSCEPGLDCLPQGPDGKLVCQ) is beta hairpin. A D10C region spans residues 173-292 (DPCNTYETLT…CNLAYCTDPS (120 aa)). Asn233 carries an N-linked (GlcNAc...) asparagine glycan. Asn276 is a glycosylation site (N-linked (GlcNAc...) asparagine). An EGF-like 4 domain is found at 293 to 324 (SVEGTCEECRVDEDCISDNGRWRCQCKQDSNI). Residue Asn323 is glycosylated (N-linked (GlcNAc...) asparagine). The ZP-N stretch occupies residues 335-430 (ECGANDIKMS…RMNFECSYPL (96 aa)). The 256-residue stretch at 335–590 (ECGANDIKMS…PTCSGTRFRS (256 aa)) folds into the ZP domain. Asn397 and Asn448 each carry an N-linked (GlcNAc...) asparagine glycan. Residues 431–454 (DMKVSLKTSLQPMVSALNISLGGT) are flexible ZP-N/ZP-C linker; important for secretion and polymerization into filaments. Positions 455–465 (GKFTVRMALFQ) are internal hydrophobic patch (IHP). The segment at 455–590 (GKFTVRMALF…PTCSGTRFRS (136 aa)) is ZP-C. 3 disulfide bridges follow: Cys507-Cys567, Cys528-Cys583, and Cys572-Cys579. N-linked (GlcNAc...) asparagine glycosylation is present at Asn514. Positions 587–590 (RFRS) are essential for cleavage by HPN. The segment at 599–607 (VLNLGPITR) is external hydrophobic patch (EHP); regulates polymerization into filaments. Ala618 is lipidated: GPI-anchor amidated alanine. Residues 619–642 (SSNLRLLSIWLLLFPSATLIFMVQ) constitute a propeptide, removed in mature form.

As to quaternary structure, homodimer that then polymerizes into long filaments. The filaments can additionally assemble laterally to form a sheet. The filaments consist of a zigzag-shaped backbone with laterally protruding arms which interact with bacterial adhesin fimH. Two fimH molecules can bind to a single UMOD monomer. N-glycosylated. Post-translationally, proteolytically cleaved at a conserved C-terminal proteolytic cleavage site to generate the secreted form found in urine. This cleavage is catalyzed by HPN. As to expression, detected in urine (secreted form). Detected in kidney thick ascending limb epithelial cells (at protein level).

It localises to the secreted. The protein resides in the apical cell membrane. The protein localises to the basolateral cell membrane. It is found in the cell projection. Its subcellular location is the cilium membrane. In terms of biological role, functions in biogenesis and organization of the apical membrane of epithelial cells of the thick ascending limb of Henle's loop (TALH), where it promotes formation of complex filamentous gel-like structure that may play a role in the water barrier permeability. May serve as a receptor for binding and endocytosis of cytokines (IL-1, IL-2) and TNF. Facilitates neutrophil migration across renal epithelia. In the urine, may contribute to colloid osmotic pressure, retards passage of positively charged electrolytes and inhibits formation of liquid containing supersaturated salts and subsequent formation of salt crystals. Protects against urinary tract infections by binding to type 1 fimbriated E.coli. Binds to the bacterial adhesin fimH which mediates the stable formation of bacterial aggregates, prevents the binding of E.coli to uroplakins UPK1A and UPK1B which act as urothelial receptors for type I fimbriae, and allows for pathogen clearance through micturation. Also promotes aggregation of other bacteria including K.pneumoniae, P.aeruginosa and S.mitis and so may also protect against other uropathogens. The protein is Uromodulin (Umod) of Mus musculus (Mouse).